Consider the following 66-residue polypeptide: Large ribosomal subunit protein bL35 (66 aa).

Belongs to the bacterial ribosomal protein bL35 family.

The sequence is that of Large ribosomal subunit protein bL35 from Leptospira biflexa serovar Patoc (strain Patoc 1 / Ames).